The chain runs to 363 residues: G-protein coupled receptor 4 (363 aa).

Residues 1 to 8 are Extracellular-facing; the sequence is MGNGTWEG. The N-linked (GlcNAc...) asparagine glycan is linked to Asn3. The chain crosses the membrane as a helical span at residues 9 to 45; the sequence is CHVDSRVDHLFPPSLYIFVIGVGLPTNCLALWAAYRQ. 2 cysteine pairs are disulfide-bonded: Cys9–Cys258 and Cys90–Cys168. Residues 46–49 lie on the Cytoplasmic side of the membrane; it reads VRQR. The helical transmembrane segment at 50-80 threads the bilayer; sequence NELGVYLMNLSIADLLYICTLPLWVDYFLHH. Topologically, residues 81 to 85 are extracellular; that stretch reads DNWIH. The helical transmembrane segment at 86–121 threads the bilayer; the sequence is GPGSCKLFGFIFYTNIYISIAFLCCISVDRYLAVAH. Residues 122-129 lie on the Cytoplasmic side of the membrane; it reads PLRFARLR. A helical transmembrane segment spans residues 130 to 156; sequence RVKTAVAVSSVVWATELGANSVPLFHD. Residues 157–172 lie on the Extracellular side of the membrane; it reads ELFRDRYNHTFCFEKF. Residues 157-172 are extracellular loop 2 (ECL2); that stretch reads ELFRDRYNHTFCFEKF. N-linked (GlcNAc...) asparagine glycosylation occurs at Asn164. The chain crosses the membrane as a helical span at residues 173-210; sequence PMEGWVAWMNLYRVFVGFLFPWALMLLSYRGILRAVRG. Residues 211-214 lie on the Cytoplasmic side of the membrane; that stretch reads SVST. Residues 215–250 form a helical membrane-spanning segment; sequence ERQEKAKIKRLALSLIAIVLVCFAPYHVLLLSRSAV. Topologically, residues 251 to 260 are extracellular; sequence YLGHPWDCGF. The helical transmembrane segment at 261 to 289 threads the bilayer; sequence EERVFSAYHSSLAFTSLNCVADPILYCLV. The Cytoplasmic segment spans residues 290-363; sequence NEGARSDVAK…QLKMLPPPAP (74 aa). The tract at residues 344 to 363 is disordered; it reads ASPPSQGDQVQLKMLPPPAP.

The protein belongs to the G-protein coupled receptor 1 family.

It localises to the cell membrane. Its activity is regulated as follows. Activated by a network of residues that connects an extracellular-facing cavity to Glu-145, a conserved charged residue buried in the transmembrane core of the receptor. Protonation likely drives conformational changes in extracellular loop 2 (ECL2), which stabilizes movement of transmembrane 3 (TM3) and a series of rearrangements that connect the extracellular-facing cavity to Glu-145, a residue only conserved in proton-sensing G-protein coupled receptors. Proton-sensing G-protein coupled receptor activated by extracellular pH, which is required to monitor pH changes and generate adaptive reactions. Activated by an optimal pH of 6.8-7.2. Ligand binding causes a conformation change that triggers signaling via guanine nucleotide-binding proteins (G proteins) and modulates the activity of downstream effectors, such as adenylate cyclase. GPR4 is mainly coupled to G(s) G proteins and mediates activation of adenylate cyclase activity. May also couple with G(q) and G(12)/G(13) G proteins. Acts as a key regulator of respiratory sensitivity to CO2/H(+) in brain retrotrapezoid nucleus neurons: acts by mediating detection of protons generated by the formation of carbonic acid in the blood, an important mechanism to impulse to breathe. Also acts as a regulator of acid secretion in the kidney collecting duct by maintaining acid-base homeostasis in the kidney. Acidosis-induced GPR4 activation increases paracellular gap formation and permeability of vascular endothelial cells, possibly through the G(12)/G(13)/Rho GTPase signaling pathway. The chain is G-protein coupled receptor 4 (GPR4) from Sus scrofa (Pig).